Here is a 663-residue protein sequence, read N- to C-terminus: Protein MNE1 (663 aa).

The chain is Protein MNE1 (MNE1) from Saccharomyces cerevisiae (strain ATCC 204508 / S288c) (Baker's yeast).